We begin with the raw amino-acid sequence, 380 residues long: Actinidain (380 aa).

A signal peptide spans 1-24 (MGLPKSFVSMSLLFFSTLLILSLA). A propeptide spans 25-126 (FNAKNLTQRT…NQYEPRVGQV (102 aa)) (activation peptide). 3 cysteine pairs are disulfide-bonded: C148–C191, C182–C224, and C282–C332. C151 is a catalytic residue. C151 contributes to the E64 binding site. Catalysis depends on residues H288 and N308.

It belongs to the peptidase C1 family. As to expression, fruit.

The enzyme catalyses Specificity close to that of papain.. Repressed by the active-site-directed cysteine protease inhibitor E64 (L-trans-epoxysuccinyl-leucylamide-(4-guanido)-butane) produced by Aspergillus japonicus. Functionally, cysteine protease responsible for the cleavage of kiwellin into kissper and KiTH. This is Actinidain from Actinidia chinensis var. chinensis (Chinese soft-hair kiwi).